We begin with the raw amino-acid sequence, 327 residues long: (-)-delta-cadinene synthase (327 aa).

Asp84, Asp85, Asn222, Thr226, and Glu230 together coordinate Mg(2+).

It belongs to the terpene synthase family.

The catalysed reaction is (2E,6E)-farnesyl diphosphate = (-)-delta-cadinene + diphosphate. Its function is as follows. Catalyzes the conversion of (2E,6E)-farnesyl diphosphate into (-)-delta-cadinene. Cyclization mechanism involves an intermediate nerolidyl diphosphate leading to a helminthogermacradienyl cation. The chain is (-)-delta-cadinene synthase from Streptomyces clavuligerus.